A 213-amino-acid polypeptide reads, in one-letter code: Phosphatidylserine decarboxylase proenzyme (213 aa).

Ser182 acts as the Schiff-base intermediate with substrate; via pyruvic acid in catalysis. Ser182 is subject to Pyruvic acid (Ser); by autocatalysis.

This sequence belongs to the phosphatidylserine decarboxylase family. PSD-A subfamily. Heterodimer of a large membrane-associated beta subunit and a small pyruvoyl-containing alpha subunit. The cofactor is pyruvate. In terms of processing, is synthesized initially as an inactive proenzyme. Formation of the active enzyme involves a self-maturation process in which the active site pyruvoyl group is generated from an internal serine residue via an autocatalytic post-translational modification. Two non-identical subunits are generated from the proenzyme in this reaction, and the pyruvate is formed at the N-terminus of the alpha chain, which is derived from the carboxyl end of the proenzyme. The post-translation cleavage follows an unusual pathway, termed non-hydrolytic serinolysis, in which the side chain hydroxyl group of the serine supplies its oxygen atom to form the C-terminus of the beta chain, while the remainder of the serine residue undergoes an oxidative deamination to produce ammonia and the pyruvoyl prosthetic group on the alpha chain.

The protein localises to the cell membrane. It catalyses the reaction a 1,2-diacyl-sn-glycero-3-phospho-L-serine + H(+) = a 1,2-diacyl-sn-glycero-3-phosphoethanolamine + CO2. It participates in phospholipid metabolism; phosphatidylethanolamine biosynthesis; phosphatidylethanolamine from CDP-diacylglycerol: step 2/2. Its function is as follows. Catalyzes the formation of phosphatidylethanolamine (PtdEtn) from phosphatidylserine (PtdSer). This Geotalea uraniireducens (strain Rf4) (Geobacter uraniireducens) protein is Phosphatidylserine decarboxylase proenzyme.